The following is a 613-amino-acid chain: Protein CER1-like 2 (613 aa).

Transmembrane regions (helical) follow at residues Trp-13–Tyr-33, Leu-44–Ser-64, Ile-95–Ile-115, Gly-122–His-142, Leu-182–Ile-202, and Tyr-322–Phe-342. Residues Val-134–Thr-268 enclose the Fatty acid hydroxylase domain.

It belongs to the sterol desaturase family. In terms of tissue distribution, not detected in any tissues.

It is found in the membrane. This Arabidopsis thaliana (Mouse-ear cress) protein is Protein CER1-like 2.